The chain runs to 271 residues: Uridine-cytidine kinase 1-B (271 aa).

Position 24–32 (24–32) interacts with ATP; the sequence is GGTASGKST. Residues Asp-81, Tyr-109, His-114, Arg-163, Arg-172, and Gln-180 each contribute to the substrate site. Asp-209 is an ATP binding site. The disordered stretch occupies residues 240–271; that stretch reads RSQKRTLPGQGDSGGLLLQGKRTHLESSSRPH. A compositionally biased stretch (low complexity) spans 246–259; it reads LPGQGDSGGLLLQG. The segment covering 262–271 has biased composition (basic and acidic residues); sequence THLESSSRPH.

This sequence belongs to the uridine kinase family.

The catalysed reaction is uridine + ATP = UMP + ADP + H(+). The enzyme catalyses cytidine + ATP = CMP + ADP + H(+). It functions in the pathway pyrimidine metabolism; CTP biosynthesis via salvage pathway; CTP from cytidine: step 1/3. It participates in pyrimidine metabolism; UMP biosynthesis via salvage pathway; UMP from uridine: step 1/1. Functionally, phosphorylates uridine and cytidine to uridine monophosphate and cytidine monophosphate. Does not phosphorylate deoxyribonucleosides or purine ribonucleosides. Can use ATP or GTP as a phosphate donor. This Xenopus laevis (African clawed frog) protein is Uridine-cytidine kinase 1-B (uck1-b).